A 1698-amino-acid polypeptide reads, in one-letter code: Protein 4.1 homolog (1698 aa).

Residues 1–31 (MPAEIKPSAPAEPETPTKSKPKSSSSSHGKP) are disordered. Residues 12 to 27 (EPETPTKSKPKSSSSS) show a composition bias toward low complexity. Residues 32–314 (ALARVTLLDG…EHHTFFRLMT (283 aa)) form the FERM domain. Residues 317 to 434 (PVSKSKMFPV…KEEKERKERE (118 aa)) form a hydrophilic region. Disordered regions lie at residues 335-361 (GRTQ…SGAR) and 374-710 (EKEK…SDPT). Basic and acidic residues predominate over residues 374–448 (EKEKVARKSS…EEKKKAEKAA (75 aa)). The span at 449–461 (KAALAAGAAAGAA) shows a compositional bias: low complexity. Ser471, Ser474, and Ser478 each carry phosphoserine. The span at 499–514 (KDGKDKSGKDKDKEVG) shows a compositional bias: basic and acidic residues. Polar residues predominate over residues 562–571 (DGNTSPTRKS). Ser566 carries the post-translational modification Phosphoserine. The segment covering 579-589 (YDQDPNSRKSG) has biased composition (basic and acidic residues). Over residues 594–603 (EQLSPTSQQK) the composition is skewed to polar residues. Positions 618 to 627 (ALKETAEKLK) are enriched in basic and acidic residues. A phosphoserine mark is found at Ser659 and Ser687. A compositionally biased stretch (polar residues) spans 684–696 (RSYSPTKGPQGYS). Phosphothreonine is present on Thr689. Residues Ser697, Ser1398, Ser1401, and Ser1402 each carry the phosphoserine modification. The interval 1286–1698 (GEIVQVDPND…EKIEIQQQTQ (413 aa)) is C-terminal (CTD). Thr1407 carries the post-translational modification Phosphothreonine. Positions 1509-1532 (LGKNAKTEQLEEKTVATTRTHDPN) are enriched in basic and acidic residues. Residues 1509 to 1599 (LGKNAKTEQL…SPLFTTSATT (91 aa)) are disordered. Residues 1533–1554 (KQQQRVVTQEVKTTATVTSGDQ) are compositionally biased toward polar residues. A compositionally biased stretch (low complexity) spans 1561–1571 (VSSTSSGDSGT). Residues 1584–1599 (RTDNQKSPLFTTSATT) are compositionally biased toward polar residues. Position 1590 is a phosphoserine (Ser1590).

At onset of germ band retraction, expression is seen in epidermis, hindgut and foregut. During retraction, expression extends to tracheal branches and salivary glands.

Its subcellular location is the cell junction. The protein localises to the septate junction. In terms of biological role, an integral component of the septate junction. May play a role in cell-cell interactions that are necessary for proper development. Vital for embryonic development. The chain is Protein 4.1 homolog (cora) from Drosophila melanogaster (Fruit fly).